Consider the following 350-residue polypeptide: Hydroxymethylglutaryl-CoA synthase (350 aa).

Glu-83 (proton donor/acceptor) is an active-site residue. Cys-115 (acyl-thioester intermediate) is an active-site residue. Residues Cys-115 and Thr-156 each coordinate (3S)-3-hydroxy-3-methylglutaryl-CoA. Residue Arg-204 coordinates CoA. 2 residues coordinate (3S)-3-hydroxy-3-methylglutaryl-CoA: Thr-206 and His-239. His-239 serves as the catalytic Proton donor/acceptor. Lys-244 is a binding site for CoA. The (3S)-3-hydroxy-3-methylglutaryl-CoA site is built by Asn-271 and Ser-301.

The protein belongs to the thiolase-like superfamily. Archaeal HMG-CoA synthase family. In terms of assembly, interacts with acetoacetyl-CoA thiolase that catalyzes the precedent step in the pathway and with a DUF35 protein. The acetoacetyl-CoA thiolase/HMG-CoA synthase complex channels the intermediate via a fused CoA-binding site, which allows for efficient coupling of the endergonic thiolase reaction with the exergonic HMGCS reaction.

The catalysed reaction is acetoacetyl-CoA + acetyl-CoA + H2O = (3S)-3-hydroxy-3-methylglutaryl-CoA + CoA + H(+). Its pathway is metabolic intermediate biosynthesis; (R)-mevalonate biosynthesis; (R)-mevalonate from acetyl-CoA: step 2/3. Its function is as follows. Catalyzes the condensation of acetyl-CoA with acetoacetyl-CoA to form 3-hydroxy-3-methylglutaryl-CoA (HMG-CoA). Functions in the mevalonate (MVA) pathway leading to isopentenyl diphosphate (IPP), a key precursor for the biosynthesis of isoprenoid compounds that are building blocks of archaeal membrane lipids. The chain is Hydroxymethylglutaryl-CoA synthase from Pyrococcus horikoshii (strain ATCC 700860 / DSM 12428 / JCM 9974 / NBRC 100139 / OT-3).